A 360-amino-acid chain; its full sequence is Uptake hydrogenase small subunit (360 aa).

The tat-type signal signal peptide spans 1 to 46 (MATAETFYDVIRRQGITRRSFTKFCSLTAASLGFGPGAATAMAEAL). Residues C62, C65, C160, C194, H232, C235, C260, and C266 each contribute to the [4Fe-4S] cluster site. The [3Fe-4S] cluster site is built by C275, C294, and C297.

It belongs to the [NiFe]/[NiFeSe] hydrogenase small subunit family. As to quaternary structure, heterodimer of a large and a small subunit. [4Fe-4S] cluster is required as a cofactor. [3Fe-4S] cluster serves as cofactor. Predicted to be exported by the Tat system. The position of the signal peptide cleavage has not been experimentally proven.

The protein resides in the cell membrane. It catalyses the reaction H2 + A = AH2. In terms of biological role, this enzyme recycles the H(2) produced by nitrogenase to increase the production of ATP and to protect nitrogenase against inhibition or damage by O(2) under carbon- or phosphate-limited conditions. This chain is Uptake hydrogenase small subunit (hupA), found in Rhizobium leguminosarum bv. viciae.